The primary structure comprises 130 residues: Small ribosomal subunit protein uS9 (130 aa).

A disordered region spans residues 98–130; that stretch reads LKRAGFLTRDARKKERKKYGQPGARKRFQYSKR. Positions 111 to 130 are enriched in basic residues; the sequence is KERKKYGQPGARKRFQYSKR.

It belongs to the universal ribosomal protein uS9 family.

The protein is Small ribosomal subunit protein uS9 of Sorangium cellulosum (strain So ce56) (Polyangium cellulosum (strain So ce56)).